Consider the following 168-residue polypeptide: ATP synthase F(1) complex subunit delta, mitochondrial (168 aa).

A mitochondrion-targeting transit peptide spans 1 to 22 (MLPASLLRHPGLRRLMLQARTY). N6-acetyllysine; alternate occurs at positions 136 and 165. N6-succinyllysine; alternate occurs at positions 136 and 165.

It belongs to the ATPase epsilon chain family. In terms of assembly, component of the ATP synthase complex composed at least of ATP5F1A/subunit alpha, ATP5F1B/subunit beta, ATP5MC1/subunit c (homooctomer), MT-ATP6/subunit a, MT-ATP8/subunit 8, ATP5ME/subunit e, ATP5MF/subunit f, ATP5MG/subunit g, ATP5MK/subunit k, ATP5MJ/subunit j, ATP5F1C/subunit gamma, ATP5F1D/subunit delta, ATP5F1E/subunit epsilon, ATP5PF/subunit F6, ATP5PB/subunit b, ATP5PD/subunit d, ATP5PO/subunit OSCP. ATP synthase complex consists of a soluble F(1) head domain (subunits alpha(3) and beta(3)) - the catalytic core - and a membrane F(0) domain - the membrane proton channel (subunits c, a, 8, e, f, g, k and j). These two domains are linked by a central stalk (subunits gamma, delta, and epsilon) rotating inside the F1 region and a stationary peripheral stalk (subunits F6, b, d, and OSCP). Component of a complex composed at least by ATPIF1, ATP5F1A, ATP5F1B, ATP5F1C AND ATP5F1E.

It is found in the mitochondrion. Its subcellular location is the mitochondrion inner membrane. In terms of biological role, subunit delta, of the mitochondrial membrane ATP synthase complex (F(1)F(0) ATP synthase or Complex V) that produces ATP from ADP in the presence of a proton gradient across the membrane which is generated by electron transport complexes of the respiratory chain. ATP synthase complex consist of a soluble F(1) head domain - the catalytic core - and a membrane F(1) domain - the membrane proton channel. These two domains are linked by a central stalk rotating inside the F(1) region and a stationary peripheral stalk. During catalysis, ATP synthesis in the catalytic domain of F(1) is coupled via a rotary mechanism of the central stalk subunits to proton translocation. In vivo, can only synthesize ATP although its ATP hydrolase activity can be activated artificially in vitro. With the central stalk subunit gamma, is essential for the biogenesis of F(1) catalytic part of the ATP synthase complex namely in the formation of F1 assembly intermediate. The sequence is that of ATP synthase F(1) complex subunit delta, mitochondrial from Mus musculus (Mouse).